The primary structure comprises 449 residues: Mannan endo-1,6-alpha-mannosidase DCW1 (449 aa).

The first 21 residues, 1 to 21 (MLVNKVIGLLGVLFATRFTNA), serve as a signal peptide directing secretion. Asparagine 34, asparagine 84, asparagine 109, asparagine 133, asparagine 203, asparagine 225, asparagine 240, asparagine 265, asparagine 281, asparagine 337, asparagine 362, and asparagine 420 each carry an N-linked (GlcNAc...) asparagine glycan. Glycine 428 is lipidated: GPI-anchor amidated glycine. A propeptide spans 429–449 (AGIITAVIGISIVACALWLVF) (removed in mature form).

Belongs to the glycosyl hydrolase 76 family.

It localises to the cell membrane. The enzyme catalyses Random hydrolysis of (1-&gt;6)-alpha-D-mannosidic linkages in unbranched (1-&gt;6)-mannans.. In terms of biological role, required for normal synthesis of the cell wall. This Saccharomyces cerevisiae (strain ATCC 204508 / S288c) (Baker's yeast) protein is Mannan endo-1,6-alpha-mannosidase DCW1 (DCW1).